Reading from the N-terminus, the 886-residue chain is 3',5'-cyclic-AMP phosphodiesterase 4A (886 aa).

A disordered region spans residues 1–128; that stretch reads MEPPTVPSER…GRSPLDSQAS (128 aa). Ser-13 is modified (phosphoserine). A compositionally biased stretch (low complexity) spans 36-46; it reads QPRTPIRIQQR. Positions 51–78 are enriched in basic and acidic residues; it reads SAERAERERQPHRPIERADAMDTSDRPG. Gly residues predominate over residues 93-104; that stretch reads TGTGSGGAGGGS. A phosphoserine mark is found at Gly-119 and Leu-123. The residue at position 152 (Ser-152) is a Phosphoserine; by MAPKAPK2. Ser-157, Ser-165, and Ser-209 each carry phosphoserine. Residues 294-331 form a disordered region; the sequence is KQNEVEIPSPTMKEREKQQAPRPRPSQPPPPPVPHLQP. Residues 315–328 are compositionally biased toward pro residues; that stretch reads RPRPSQPPPPPVPH. Residue Ser-346 is modified to Phosphoserine. Residues 357–686 form the PDEase domain; it reads VKTDQEELLA…DWYYSAIRQS (330 aa). Residue Lys-358 forms a Glycyl lysine isopeptide (Lys-Gly) (interchain with G-Cter in SUMO) linkage. His-433 serves as the catalytic Proton donor. His-433 contacts 3',5'-cyclic AMP. 2 residues coordinate AMP: His-433 and His-437. Residues His-437, His-473, Asp-474, and Asp-591 each coordinate Zn(2+). Residues Asp-474, Asp-591, Gln-642, and Phe-645 each coordinate AMP. Asp-474 contributes to the Mg(2+) binding site. Residue Asp-474 participates in Mn(2+) binding. 3',5'-cyclic AMP-binding residues include Gln-642 and Phe-645. Disordered stretches follow at residues 682 to 705 and 866 to 886; these read AIRQ…PLPD and FGED…GDPT. Phosphoserine occurs at positions 686 and 688. Over residues 876–886 the composition is skewed to gly residues; it reads PGGGGSGGDPT.

The protein belongs to the cyclic nucleotide phosphodiesterase family. PDE4 subfamily. In terms of assembly, interacts with LYN (via SH3 domain). Interacts with ARRB2. The cofactor is Zn(2+). Mg(2+) is required as a cofactor. Mn(2+) serves as cofactor. Post-translationally, proteolytically cleaved by CASP3. In terms of processing, phosphorylated at Ser-119 by PKA. As to expression, expressed in lymphoid cell subsets including CD8-positive T cells and T-helper 2 cells. Expressed in dendritic cells. In terms of tissue distribution, highly expressed in liver, stomach, testis, thyroid and adrenal glands and at a lower extent in placenta, kidney, pancreas, ovary, uterus and skin. Expressed in myeloid cell subsets including dendritic cells, monocytes, macrophages, eosinophils and mast cells. Expressed in natural killer cells. Expressed in bronchial smooth muscle. Expressed at high levels in the heart and small intestine. It is also found in the brain, kidney, spleen, colon, salivary gland, ovary and peripheral blood lymphocytes. As to expression, expressed predominantly in skeletal muscle and brain and at lower levels in the testis. Found in specific neuronal subpopulations including cortical pyramidal neurons, horn neurons in the spinal cord and Purkinje cells in cerebellum (at protein level).

The protein localises to the cytoplasm. Its subcellular location is the perinuclear region. The protein resides in the cell projection. It localises to the ruffle membrane. It is found in the cytosol. The protein localises to the membrane. The catalysed reaction is 3',5'-cyclic AMP + H2O = AMP + H(+). It functions in the pathway purine metabolism; 3',5'-cyclic AMP degradation; AMP from 3',5'-cyclic AMP: step 1/1. With respect to regulation, inhibited by rolipram, cilomilast, Ro 20-1724, roflumilast and denbufylline. Inhibited by rolipram. Its activity is regulated as follows. Inhibited by rolipram and cilomilast. Hydrolyzes the second messenger 3',5'-cyclic AMP (cAMP), which is a key regulator of many important physiological processes. In terms of biological role, efficiently hydrolyzes cAMP. Its function is as follows. Efficiently hydrolyzes cAMP. The phosphodiesterase activity is not affected by calcium, calmodulin or cyclic GMP (cGMP) levels. Does not hydrolyze cGMP. The polypeptide is 3',5'-cyclic-AMP phosphodiesterase 4A (PDE4A) (Homo sapiens (Human)).